A 525-amino-acid polypeptide reads, in one-letter code: GMP synthase [glutamine-hydrolyzing] (525 aa).

The region spanning 9 to 207 is the Glutamine amidotransferase type-1 domain; sequence RILILDFGSQ…VRDICQCEAL (199 aa). Cys86 functions as the Nucleophile in the catalytic mechanism. Catalysis depends on residues His181 and Glu183. The 193-residue stretch at 208–400 folds into the GMPS ATP-PPase domain; the sequence is WTPAKIIDDA…LGLPYNMLYR (193 aa). 235–241 serves as a coordination point for ATP; the sequence is SGGVDSS.

As to quaternary structure, homodimer.

The catalysed reaction is XMP + L-glutamine + ATP + H2O = GMP + L-glutamate + AMP + diphosphate + 2 H(+). It participates in purine metabolism; GMP biosynthesis; GMP from XMP (L-Gln route): step 1/1. Its function is as follows. Catalyzes the synthesis of GMP from XMP. The polypeptide is GMP synthase [glutamine-hydrolyzing] (Pectobacterium carotovorum subsp. carotovorum (strain PC1)).